We begin with the raw amino-acid sequence, 222 residues long: Glutathione S-transferase A4 (222 aa).

Methionine 1 is subject to N-acetylmethionine. The GST N-terminal domain occupies 3 to 83 (AKPKLYYFNG…YLAAKYNLYG (81 aa)). Residues tyrosine 9, 53–55 (GQV), and 66–68 (TQT) contribute to the glutathione site. Residues 85–208 (DLKERVRIDM…QPGSQRKPPP (124 aa)) form the GST C-terminal domain.

This sequence belongs to the GST superfamily. Alpha family. Homodimer. In terms of processing, the N-terminus is blocked.

The protein localises to the cytoplasm. It carries out the reaction RX + glutathione = an S-substituted glutathione + a halide anion + H(+). In terms of biological role, conjugation of reduced glutathione to a wide number of exogenous and endogenous hydrophobic electrophiles. The polypeptide is Glutathione S-transferase A4 (Gsta4) (Mus musculus (Mouse)).